The primary structure comprises 584 residues: Arginine--tRNA ligase (584 aa).

The 'HIGH' region signature appears at 130 to 140 (PNVAKEMHVGH).

This sequence belongs to the class-I aminoacyl-tRNA synthetase family. In terms of assembly, monomer.

It localises to the cytoplasm. The enzyme catalyses tRNA(Arg) + L-arginine + ATP = L-arginyl-tRNA(Arg) + AMP + diphosphate. The chain is Arginine--tRNA ligase from Protochlamydia amoebophila (strain UWE25).